A 359-amino-acid polypeptide reads, in one-letter code: Zinc finger CCCH domain-containing protein 20 (359 aa).

3 consecutive C3H1-type zinc fingers follow at residues 75–107 (TCDH…HPGE), 119–145 (YSGT…HGVF), and 153–177 (RYRT…HSPD). Disordered stretches follow at residues 207–226 (SISP…SDSS) and 334–359 (MGRI…DLVM).

This chain is Zinc finger CCCH domain-containing protein 20, found in Arabidopsis thaliana (Mouse-ear cress).